We begin with the raw amino-acid sequence, 414 residues long: Na(+)/H(+) antiporter NhaA (414 aa).

A run of 11 helical transmembrane segments spans residues 22 to 42, 61 to 81, 101 to 121, 131 to 151, 171 to 191, 215 to 235, 239 to 259, 281 to 301, 308 to 328, 343 to 363, and 379 to 399; these read VGGF…NSPF, LHLT…FFVV, MLPI…YAAF, GWGI…AVVG, LGAI…LPLI, SAAL…WALV, GVHA…VPLA, VLPV…LGAV, LGII…GSWV, WIDI…SLLI, and KAGV…VLAV.

It belongs to the NhaA Na(+)/H(+) (TC 2.A.33) antiporter family.

The protein localises to the cell membrane. The enzyme catalyses Na(+)(in) + 2 H(+)(out) = Na(+)(out) + 2 H(+)(in). Na(+)/H(+) antiporter that extrudes sodium in exchange for external protons. The protein is Na(+)/H(+) antiporter NhaA of Thermobifida fusca (strain YX).